A 346-amino-acid polypeptide reads, in one-letter code: [LysW]-lysine/[LysW]-ornithine hydrolase (346 aa).

His-68 contributes to the Zn(2+) binding site. Asp-70 is an active-site residue. Asp-92 contacts Zn(2+). Glu-122 functions as the Proton acceptor in the catalytic mechanism. Residues Glu-123, Glu-146, and His-317 each coordinate Zn(2+).

It belongs to the peptidase M20A family. LysK subfamily. The cofactor is Zn(2+). It depends on Co(2+) as a cofactor.

It localises to the cytoplasm. It catalyses the reaction [amino-group carrier protein]-C-terminal-gamma-(L-lysyl)-L-glutamate + H2O = [amino-group carrier protein]-C-terminal-L-glutamate + L-lysine. The enzyme catalyses [amino-group carrier protein]-C-terminal-gamma-(L-ornithyl)-L-glutamate + H2O = [amino-group carrier protein]-C-terminal-L-glutamate + L-ornithine. Its pathway is amino-acid biosynthesis; L-lysine biosynthesis via AAA pathway; L-lysine from L-alpha-aminoadipate (Thermus route): step 5/5. It functions in the pathway amino-acid biosynthesis; L-arginine biosynthesis. In terms of biological role, catalyzes the release of L-lysine from [LysW]-gamma-L-lysine and the release of L-ornithine from [LysW]-L-ornithine. The polypeptide is [LysW]-lysine/[LysW]-ornithine hydrolase (Saccharolobus islandicus (strain M.16.4 / Kamchatka #3) (Sulfolobus islandicus)).